The primary structure comprises 261 residues: Rho-related GTP-binding protein RhoU (261 aa).

The interval 1–48 (MAPQQGRPALPARCEPPAAPPVPPRRERGGRGARGPGVSGGRGRAGGA) is disordered. A compositionally biased stretch (low complexity) spans 7–16 (RPALPARCEP). The segment covering 32–48 (GARGPGVSGGRGRAGGA) has biased composition (gly residues). GTP-binding positions include 59–66 (GDGAVGKT), 106–110 (DTAGQ), and 164–167 (TQSD). Glycyl lysine isopeptide (Lys-Gly) (interchain with G-Cter in ubiquitin) cross-links involve residues lysine 180 and lysine 251. Cysteine 259 carries the S-palmitoyl cysteine lipid modification.

Belongs to the small GTPase superfamily. Rho family. In terms of assembly, interacts with PAK1. Interacts with PAK3. Interacts with ARHGAP30 in a GTP-independent manner. In its GTP-loaded conformation, interacts with ARHGAP31. Interacts with PTK2B/PYK2. Interacts with PAK4; interaction protects RHOU from ubiquitination and subsequent degradation. Mg(2+) serves as cofactor. Tyrosine phosphorylated by SRC in response to PTK2B/PYK2 activation. Post-translationally, ubiquitinated. 'Lys-48'-linked ubiquitination at Lys-180 and Lys-251 by the ECS(RAB40A) complex leading to its degradation.

The protein resides in the cell membrane. It is found in the golgi apparatus membrane. Its subcellular location is the cell junction. It localises to the focal adhesion. The protein localises to the cell projection. The protein resides in the podosome. Functionally, binds to and activates protein kinase PAK1. Plays a role in the regulation of cell morphology, cytoskeletal organization and focal adhesion assembly during cell migration. Also stimulates quiescent cells to reenter the cell cycle. Has no detectable GTPase activity but its high intrinsic guanine nucleotide exchange activity suggests it is constitutively GTP-bound. The sequence is that of Rho-related GTP-binding protein RhoU from Mus musculus (Mouse).